Here is a 227-residue protein sequence, read N- to C-terminus: Acyl-protein thioesterase 1 (227 aa).

Catalysis depends on charge relay system residues Ser119, Asp173, and His207.

It belongs to the AB hydrolase superfamily. AB hydrolase 2 family.

The protein localises to the cytoplasm. It is found in the nucleus. The catalysed reaction is S-hexadecanoyl-L-cysteinyl-[protein] + H2O = L-cysteinyl-[protein] + hexadecanoate + H(+). In terms of biological role, hydrolyzes fatty acids from S-acylated cysteine residues in proteins with a strong preference for palmitoylated G-alpha proteins over other acyl substrates. Mediates the deacylation of G-alpha proteins such as GPA1 in vivo, but has weak or no activity toward palmitoylated Ras proteins. Has weak lysophospholipase activity in vitro; however such activity may not exist in vivo. This Yarrowia lipolytica (strain CLIB 122 / E 150) (Yeast) protein is Acyl-protein thioesterase 1.